A 283-amino-acid chain; its full sequence is MTETRRLRILITNDDGIKAKGISLLISLLREADFADLYVVAPLEEQSGRSMAFSLVEPTALEPFDYPQRVQEAWAVTGTPVDCVKLAIGELFKENALDLILSGINNGKNSGRCLYYSATVGAIREANLHGIPAIALSQSENIAFFQEAHMASLIRSLCEFTVAYKHTDPLGLNVNFPASADDSPWKGIRFTLSGNEFLFGIPRLVRTEGNRRYYTLYDMRDKVSEEFSEEYLALANNYISAAPLVSKNTPRATLSEEELAFLKDSFEQSVLWKASLNLEEDLA.

Residues Asp14, Asp15, Ser47, and Asn105 each coordinate a divalent metal cation.

The protein belongs to the SurE nucleotidase family. A divalent metal cation is required as a cofactor.

Its subcellular location is the cytoplasm. The enzyme catalyses a ribonucleoside 5'-phosphate + H2O = a ribonucleoside + phosphate. Functionally, nucleotidase that shows phosphatase activity on nucleoside 5'-monophosphates. The sequence is that of 5'-nucleotidase SurE from Chlamydia trachomatis serovar L2 (strain ATCC VR-902B / DSM 19102 / 434/Bu).